The sequence spans 302 residues: MFQVVSKTDWLTVRAYFALLKPRVVSLVTFTAVTGAVLAYFSGYHAPFFSVFTAIFCIAVGSGAAGALNMYYDRDIDAIMSRTSKRPIPQGKISPEAALVFGLVLFALSVLLMELAVNHLSAVLLSVAVFYYSVIYTVYLKRRTPQNIVVGGGAGAFPPMIGWAAVANHIGVESLVLFLIIFLWTPPHFWALALKNSGEYEAAGIPMLPVTSGVKATKMQILCYSVLLFITSILPYLLRFSGGTYMIVAFILGLVFLYYAINVYLDEKKCMKLFYYSVLYLFLLFGVFILDAALSTALGMLI.

The next 9 helical transmembrane spans lie at 24–44 (VVSL…FSGY), 48–68 (FFSV…AGAL), 97–117 (AALV…ELAV), 120–140 (LSAV…TVYL), 147–167 (NIVV…AAVA), 174–194 (SLVL…ALAL), 221–241 (ILCY…LRFS), 245–265 (YMIV…NVYL), and 282–302 (FLLF…GMLI).

This sequence belongs to the UbiA prenyltransferase family. Protoheme IX farnesyltransferase subfamily.

It localises to the cell inner membrane. It carries out the reaction heme b + (2E,6E)-farnesyl diphosphate + H2O = Fe(II)-heme o + diphosphate. Its pathway is porphyrin-containing compound metabolism; heme O biosynthesis; heme O from protoheme: step 1/1. Converts heme B (protoheme IX) to heme O by substitution of the vinyl group on carbon 2 of heme B porphyrin ring with a hydroxyethyl farnesyl side group. This chain is Protoheme IX farnesyltransferase, found in Neorickettsia sennetsu (strain ATCC VR-367 / Miyayama) (Ehrlichia sennetsu).